Here is a 776-residue protein sequence, read N- to C-terminus: Acetone carboxylase alpha subunit (776 aa).

As to quaternary structure, heterohexamer of two alpha, two beta and two gamma subunits. It depends on Fe cation as a cofactor. The cofactor is Mg(2+). Requires Zn(2+) as cofactor. The N-terminus is blocked.

It catalyses the reaction acetone + hydrogencarbonate + 2 ATP + 3 H2O = acetoacetate + 2 AMP + 4 phosphate + 4 H(+). Functionally, catalyzes the carboxylation of acetone to form acetoacetate. Has a reduced activity on butanone, and no activity on 2-pentatone, 3-pentatone, 2-hexanone, chloroacetone, pyruvate, phosphoenolpyruvate, acetaldehyde, propionaldehyde and propylene oxide. This Xanthobacter autotrophicus (strain ATCC BAA-1158 / Py2) protein is Acetone carboxylase alpha subunit.